A 306-amino-acid polypeptide reads, in one-letter code: Methionyl-tRNA formyltransferase (306 aa).

110-113 (SLLP) lines the (6S)-5,6,7,8-tetrahydrofolate pocket.

It belongs to the Fmt family.

It carries out the reaction L-methionyl-tRNA(fMet) + (6R)-10-formyltetrahydrofolate = N-formyl-L-methionyl-tRNA(fMet) + (6S)-5,6,7,8-tetrahydrofolate + H(+). In terms of biological role, attaches a formyl group to the free amino group of methionyl-tRNA(fMet). The formyl group appears to play a dual role in the initiator identity of N-formylmethionyl-tRNA by promoting its recognition by IF2 and preventing the misappropriation of this tRNA by the elongation apparatus. This chain is Methionyl-tRNA formyltransferase, found in Brucella anthropi (strain ATCC 49188 / DSM 6882 / CCUG 24695 / JCM 21032 / LMG 3331 / NBRC 15819 / NCTC 12168 / Alc 37) (Ochrobactrum anthropi).